We begin with the raw amino-acid sequence, 836 residues long: DNA gyrase subunit A (836 aa).

Positions 34-500 (LPDARDGLKP…AGDVRDIEDI (467 aa)) constitute a Topo IIA-type catalytic domain. Tyrosine 122 (O-(5'-phospho-DNA)-tyrosine intermediate) is an active-site residue. The GyrA-box signature appears at 527–533 (QKRGGQG).

It belongs to the type II topoisomerase GyrA/ParC subunit family. Heterotetramer, composed of two GyrA and two GyrB chains. In the heterotetramer, GyrA contains the active site tyrosine that forms a transient covalent intermediate with DNA, while GyrB binds cofactors and catalyzes ATP hydrolysis.

The protein resides in the cytoplasm. It carries out the reaction ATP-dependent breakage, passage and rejoining of double-stranded DNA.. Its function is as follows. A type II topoisomerase that negatively supercoils closed circular double-stranded (ds) DNA in an ATP-dependent manner to modulate DNA topology and maintain chromosomes in an underwound state. Negative supercoiling favors strand separation, and DNA replication, transcription, recombination and repair, all of which involve strand separation. Also able to catalyze the interconversion of other topological isomers of dsDNA rings, including catenanes and knotted rings. Type II topoisomerases break and join 2 DNA strands simultaneously in an ATP-dependent manner. The polypeptide is DNA gyrase subunit A (Chlamydia trachomatis serovar D (strain ATCC VR-885 / DSM 19411 / UW-3/Cx)).